The chain runs to 306 residues: UDP-N-acetylenolpyruvoylglucosamine reductase (306 aa).

The region spanning 33–197 (TGGEADFYLS…LEAAFTLEPG (165 aa)) is the FAD-binding PCMH-type domain. Arg176 is an active-site residue. Ser226 acts as the Proton donor in catalysis. Glu296 is a catalytic residue.

The protein belongs to the MurB family. FAD is required as a cofactor.

The protein localises to the cytoplasm. It carries out the reaction UDP-N-acetyl-alpha-D-muramate + NADP(+) = UDP-N-acetyl-3-O-(1-carboxyvinyl)-alpha-D-glucosamine + NADPH + H(+). It participates in cell wall biogenesis; peptidoglycan biosynthesis. Functionally, cell wall formation. The sequence is that of UDP-N-acetylenolpyruvoylglucosamine reductase from Staphylococcus epidermidis (strain ATCC 35984 / DSM 28319 / BCRC 17069 / CCUG 31568 / BM 3577 / RP62A).